The chain runs to 65 residues: Antitoxin VapB32 (65 aa).

Residues 46-65 (ALGGTDPQATAAPRRRTSPR) are disordered.

In terms of biological role, antitoxin component of a type II toxin-antitoxin (TA) system. The polypeptide is Antitoxin VapB32 (vapB32) (Mycobacterium tuberculosis (strain CDC 1551 / Oshkosh)).